The primary structure comprises 99 residues: Large ribosomal subunit protein uL23 (99 aa).

Belongs to the universal ribosomal protein uL23 family. In terms of assembly, part of the 50S ribosomal subunit. Contacts protein L29, and trigger factor when it is bound to the ribosome.

Its function is as follows. One of the early assembly proteins it binds 23S rRNA. One of the proteins that surrounds the polypeptide exit tunnel on the outside of the ribosome. Forms the main docking site for trigger factor binding to the ribosome. The protein is Large ribosomal subunit protein uL23 of Hyphomonas neptunium (strain ATCC 15444).